The following is a 396-amino-acid chain: Probable glucan endo-1,6-beta-glucosidase B (396 aa).

Positions 1–17 are cleaved as a signal peptide; that stretch reads MIRRLAAFSALSGLATA. N-linked (GlcNAc...) asparagine glycosylation occurs at Asn-30. The active-site Proton donor is the Glu-219. Residue Asn-272 is glycosylated (N-linked (GlcNAc...) asparagine). The active-site Nucleophile is the Glu-320.

It belongs to the glycosyl hydrolase 5 (cellulase A) family.

Its subcellular location is the secreted. The enzyme catalyses Random hydrolysis of (1-&gt;6)-linkages in (1-&gt;6)-beta-D-glucans.. In terms of biological role, beta-glucanases participate in the metabolism of beta-glucan, the main structural component of the cell wall. Acts on lutean, pustulan and 1,6-oligo-beta-D-glucosides. This is Probable glucan endo-1,6-beta-glucosidase B (exgB) from Aspergillus fumigatus (strain CBS 144.89 / FGSC A1163 / CEA10) (Neosartorya fumigata).